The following is a 507-amino-acid chain: Phospho-2-dehydro-3-deoxyheptonate aldolase 2, chloroplastic (507 aa).

This sequence belongs to the class-II DAHP synthase family.

The protein localises to the plastid. Its subcellular location is the chloroplast. It carries out the reaction D-erythrose 4-phosphate + phosphoenolpyruvate + H2O = 7-phospho-2-dehydro-3-deoxy-D-arabino-heptonate + phosphate. The protein operates within metabolic intermediate biosynthesis; chorismate biosynthesis; chorismate from D-erythrose 4-phosphate and phosphoenolpyruvate: step 1/7. This Arabidopsis thaliana (Mouse-ear cress) protein is Phospho-2-dehydro-3-deoxyheptonate aldolase 2, chloroplastic (DHS2).